Reading from the N-terminus, the 75-residue chain is Small ribosomal subunit protein bS16 (75 aa).

The protein belongs to the bacterial ribosomal protein bS16 family.

The sequence is that of Small ribosomal subunit protein bS16 from Campylobacter hominis (strain ATCC BAA-381 / DSM 21671 / CCUG 45161 / LMG 19568 / NCTC 13146 / CH001A).